The primary structure comprises 549 residues: Neutral amino acid transporter 9 (549 aa).

Residues 1 to 27 (MDEDSKPLLGSVPTGDYYTDSLDPKQR) form a disordered region. Over 1-107 (MDEDSKPLLG…GGDSPIKNPS (107 aa)) the chain is Cytoplasmic. The chain crosses the membrane as a helical span at residues 108–128 (IVTIFAIWNTMMGTSILSIPW). The segment at 117–122 (TMMGTS) is important for arginine binding and amino acid transport. An arginine-binding site is contributed by Ser-122. Topologically, residues 129 to 134 (GIKQAG) are lumenal. A helical transmembrane segment spans residues 135–155 (FTLGIIIIVLMGLLTLYCCYR). At 156 to 186 (VLKSTKSIPYVDTSDWEFPDVCKYYFGGFGK) the chain is on the cytoplasmic side. The chain crosses the membrane as a helical span at residues 187–213 (WSSLVFSLVSLIGAMVVYWVLMSNFLF). At 214 to 271 (NTGKFIFNYVHNVNTSDAFGTNGTERVICPYPDVDPHGNSSTSLYSGSDNSTGLEFDH) the chain is on the lumenal side. Residues Asn-227, Asn-235, Asn-252, and Asn-263 are each glycosylated (N-linked (GlcNAc...) asparagine). A disulfide bridge links Cys-242 with Cys-412. A helical transmembrane segment spans residues 272–288 (WWSKTNTIPFYLILLLL). Residues 289–297 (PLLNFRSAS) lie on the Cytoplasmic side of the membrane. The chain crosses the membrane as a helical span at residues 298 to 322 (FFARFTFLGTISVIYLIFLVTYKAI). Residues 323–344 (QLGFHLEFHWFDSSMFFVPEFR) are Lumenal-facing. A helical membrane pass occupies residues 345-365 (TLFPQLSGVLTLAFFIHNCII). Residues 366-382 (TLMKNNKHQENNVRDLS) are Cytoplasmic-facing. A helical membrane pass occupies residues 383-403 (LAYLLVGLTYLYVGVLIFAAF). Residues 404–425 (PSPPLSKECIEPNFLDNFPSSD) are Lumenal-facing. The helical transmembrane segment at 426–446 (ILVFVARTFLLFQMTTVYPLL) threads the bilayer. A CARC motif motif is present at residues 432-442 (RTFLLFQMTTV). Positions 445–451 (LLGYLVR) match the CRAC motif motif. Residues 447 to 467 (GYLVRVQLMGQIFGNHYPGFL) lie on the Cytoplasmic side of the membrane. The helical transmembrane segment at 468-488 (HVFVLNVFVVGAGVLMARFYP) threads the bilayer. Residues 489–495 (NIGSIIR) lie on the Lumenal side of the membrane. The chain crosses the membrane as a helical span at residues 496 to 516 (YSGALCGLALVFVLPSLIHMV). At 517 to 528 (SLKRRGELRWTS) the chain is on the cytoplasmic side. Residues 529–549 (TLFHGFLILLGVANLLGQFFM) traverse the membrane as a helical segment.

This sequence belongs to the amino acid/polyamine transporter 2 family. SLC38A9 subfamily. Associated component of the Ragulator complex. Associated component of the Rag GTPases heterodimers (RRAGA and RRAGC). In terms of processing, glycosylated.

Its subcellular location is the lysosome membrane. It localises to the late endosome membrane. The enzyme catalyses L-leucine(in) = L-leucine(out). It catalyses the reaction L-tyrosine(in) = L-tyrosine(out). It carries out the reaction L-glutamine(out) = L-glutamine(in). The catalysed reaction is L-asparagine(out) = L-asparagine(in). Its activity is regulated as follows. Amino acid transport activity is increased by sodium. Transport of L-glutamine, leucine and tyrosine is increased by arginine binding. Lysosomal amino acid transporter involved in the activation of mTORC1 in response to amino acid levels. Probably acts as an amino acid sensor of the Rag GTPases and Ragulator complexes, 2 complexes involved in amino acid sensing and activation of mTORC1, a signaling complex promoting cell growth in response to growth factors, energy levels, and amino acids. Following activation by amino acids, the Ragulator and Rag GTPases function as a scaffold recruiting mTORC1 to lysosomes where it is in turn activated. SLC38A9 mediates transport of amino acids with low capacity and specificity with a slight preference for polar amino acids. Acts as an arginine sensor. Following activation by arginine binding, mediates transport of L-glutamine, leucine and tyrosine with high efficiency, and is required for the efficient utilization of these amino acids after lysosomal protein degradation. However, the transport mechanism is not well defined and the role of sodium is not clear. Guanine exchange factor (GEF) that, upon arginine binding, stimulates GDP release from RRAGA and therefore activates the Rag GTPase heterodimer and the mTORC1 pathway in response to nutrient sufficiency. The protein is Neutral amino acid transporter 9 of Danio rerio (Zebrafish).